The chain runs to 635 residues: 1-deoxy-D-xylulose-5-phosphate synthase (635 aa).

Thiamine diphosphate is bound by residues His-77 and 118–120 (GHA). Asp-149 contacts Mg(2+). Thiamine diphosphate-binding positions include 150–151 (GS), Asn-178, Phe-290, and Glu-375. Residue Asn-178 participates in Mg(2+) binding.

The protein belongs to the transketolase family. DXPS subfamily. As to quaternary structure, homodimer. The cofactor is Mg(2+). Requires thiamine diphosphate as cofactor.

The enzyme catalyses D-glyceraldehyde 3-phosphate + pyruvate + H(+) = 1-deoxy-D-xylulose 5-phosphate + CO2. The protein operates within metabolic intermediate biosynthesis; 1-deoxy-D-xylulose 5-phosphate biosynthesis; 1-deoxy-D-xylulose 5-phosphate from D-glyceraldehyde 3-phosphate and pyruvate: step 1/1. In terms of biological role, catalyzes the acyloin condensation reaction between C atoms 2 and 3 of pyruvate and glyceraldehyde 3-phosphate to yield 1-deoxy-D-xylulose-5-phosphate (DXP). The chain is 1-deoxy-D-xylulose-5-phosphate synthase from Chlorobium phaeovibrioides (strain DSM 265 / 1930) (Prosthecochloris vibrioformis (strain DSM 265)).